A 387-amino-acid chain; its full sequence is Anhydro-N-acetylmuramic acid kinase (387 aa).

ATP is bound at residue 17-24 (GTSMDGVD).

It belongs to the anhydro-N-acetylmuramic acid kinase family.

The catalysed reaction is 1,6-anhydro-N-acetyl-beta-muramate + ATP + H2O = N-acetyl-D-muramate 6-phosphate + ADP + H(+). It functions in the pathway amino-sugar metabolism; 1,6-anhydro-N-acetylmuramate degradation. It participates in cell wall biogenesis; peptidoglycan recycling. Its function is as follows. Catalyzes the specific phosphorylation of 1,6-anhydro-N-acetylmuramic acid (anhMurNAc) with the simultaneous cleavage of the 1,6-anhydro ring, generating MurNAc-6-P. Is required for the utilization of anhMurNAc either imported from the medium or derived from its own cell wall murein, and thus plays a role in cell wall recycling. In Burkholderia pseudomallei (strain K96243), this protein is Anhydro-N-acetylmuramic acid kinase.